The sequence spans 153 residues: Glutamyl-tRNA(Gln) amidotransferase subunit C, mitochondrial (153 aa).

Residues 31 to 55 form a disordered region; sequence HPTKVPQQPEPNAFPDLDNNTDDDP.

The protein belongs to the GatC family. In terms of assembly, subunit of the heterotrimeric GatCAB amidotransferase (AdT) complex, composed of A, B and C subunits.

It is found in the mitochondrion. The catalysed reaction is L-glutamyl-tRNA(Gln) + L-glutamine + ATP + H2O = L-glutaminyl-tRNA(Gln) + L-glutamate + ADP + phosphate + H(+). Its function is as follows. Allows the formation of correctly charged Gln-tRNA(Gln) through the transamidation of misacylated Glu-tRNA(Gln) in the mitochondria. The reaction takes place in the presence of glutamine and ATP through an activated gamma-phospho-Glu-tRNA(Gln). The polypeptide is Glutamyl-tRNA(Gln) amidotransferase subunit C, mitochondrial (Drosophila willistoni (Fruit fly)).